A 640-amino-acid chain; its full sequence is Fructose-1,6-bisphosphatase class 3 (640 aa).

This sequence belongs to the FBPase class 3 family. The cofactor is Mn(2+).

The enzyme catalyses beta-D-fructose 1,6-bisphosphate + H2O = beta-D-fructose 6-phosphate + phosphate. Its pathway is carbohydrate biosynthesis; gluconeogenesis. This is Fructose-1,6-bisphosphatase class 3 from Lactococcus lactis subsp. lactis (strain IL1403) (Streptococcus lactis).